The following is a 181-amino-acid chain: Neuroblastoma suppressor of tumorigenicity 1 (181 aa).

The first 16 residues, 1–16, serve as a signal peptide directing secretion; that stretch reads MMLRVLVGAVLPAMLL. 5 cysteine pairs are disulfide-bonded: Cys35–Cys85, Cys49–Cys99, Cys59–Cys118, Cys63–Cys120, and Cys82–Cys123. The CTCK domain maps to 35–124; sequence CEAKNITQIV…ILHCSCQACG (90 aa). Positions 132–181 are disordered; that stretch reads LSVYVQGEDGPGSQPGTHPHPHPHPHPGGQTPEPEDPPGAPHTEEEGAED.

This sequence belongs to the DAN family. Homodimer. In terms of tissue distribution, most abundant in normal lung and meningioma.

The protein resides in the secreted. Functionally, possible candidate as a tumor suppressor gene of neuroblastoma. May play an important role in preventing cells from entering the final stage (G1/S) of the transformation process. The polypeptide is Neuroblastoma suppressor of tumorigenicity 1 (NBL1) (Homo sapiens (Human)).